A 137-amino-acid polypeptide reads, in one-letter code: Large-conductance mechanosensitive channel (137 aa).

Helical transmembrane passes span 10–30 and 76–96; these read FAMR…AAFG and GTFI…FSAV.

It belongs to the MscL family. In terms of assembly, homopentamer.

The protein localises to the cell inner membrane. In terms of biological role, channel that opens in response to stretch forces in the membrane lipid bilayer. May participate in the regulation of osmotic pressure changes within the cell. This is Large-conductance mechanosensitive channel from Yersinia pseudotuberculosis serotype O:1b (strain IP 31758).